The sequence spans 337 residues: Putative olfactory receptor 1F12P (337 aa).

Residues 1–25 (MEGKNQTNISEFLLLGFSSWQQQQV) are Extracellular-facing. Residues Asn-5 and Asn-8 are each glycosylated (N-linked (GlcNAc...) asparagine). Residues 26–49 (LLFALFLCLYLTGLFGNLLILLAI) form a helical membrane-spanning segment. The Cytoplasmic segment spans residues 50–57 (GSDHCLHT). A helical membrane pass occupies residues 58-79 (PMYFFLANLSLVDLCLPSATVP). At 80-100 (KMLLNIQTQTQTISYPGCLAQ) the chain is on the extracellular side. An intrachain disulfide couples Cys-97 to Cys-189. The helical transmembrane segment at 101–120 (MYFCMMFANMDNFLLTVMAY) threads the bilayer. Residues 121–139 (DRYVAICHPLHYSTIMALR) lie on the Cytoplasmic side of the membrane. The chain crosses the membrane as a helical span at residues 140 to 158 (LCASLVAAPWVIAILNPLL). At 159-196 (HTLMMAHLHFCSDNVIHHFFCDINSLLPLSCSDTSLNQ) the chain is on the extracellular side. Residues 197–219 (LSVLATVGLIFVVPSVCILVSYI) form a helical membrane-spanning segment. At 220 to 236 (LIVSAVMKVPSAQGKLK) the chain is on the cytoplasmic side. The helical transmembrane segment at 237–259 (AFSTCGSHLALVILFYGAITGVY) threads the bilayer. At 260-272 (MSPLSNHSTEKDS) the chain is on the extracellular side. N-linked (GlcNAc...) asparagine glycosylation is present at Asn-265. A helical membrane pass occupies residues 273–292 (AASVIFMVVAPVLNPFIYSL). The Cytoplasmic segment spans residues 293 to 337 (RNNELKGTLKKTLSRPGAVAHACNPSTLGGRGGWIMRSGDRDHPG).

The protein belongs to the G-protein coupled receptor 1 family.

The protein resides in the cell membrane. Functionally, odorant receptor. The sequence is that of Putative olfactory receptor 1F12P from Homo sapiens (Human).